The sequence spans 500 residues: L-arabinose isomerase (500 aa).

4 residues coordinate Mn(2+): glutamate 306, glutamate 333, histidine 350, and histidine 450.

The protein belongs to the arabinose isomerase family. Homohexamer. Mn(2+) is required as a cofactor.

It carries out the reaction beta-L-arabinopyranose = L-ribulose. The protein operates within carbohydrate degradation; L-arabinose degradation via L-ribulose; D-xylulose 5-phosphate from L-arabinose (bacterial route): step 1/3. Functionally, catalyzes the conversion of L-arabinose to L-ribulose. This chain is L-arabinose isomerase, found in Salmonella arizonae (strain ATCC BAA-731 / CDC346-86 / RSK2980).